Reading from the N-terminus, the 649-residue chain is Threonine--tRNA ligase (649 aa).

The 60-residue stretch at 1 to 60 folds into the TGS domain; the sequence is MHVTLPDGKQLDLQAGATALDVARALGPRLAQDALAALVNGELMDLMTPLPEGAQVRLIT. The interval 248 to 544 is catalytic; that stretch reads DHRKLGRELE…LIEHYGGDFP (297 aa). Zn(2+) is bound by residues Cys341, His392, and His521.

Belongs to the class-II aminoacyl-tRNA synthetase family. In terms of assembly, homodimer. It depends on Zn(2+) as a cofactor.

Its subcellular location is the cytoplasm. It catalyses the reaction tRNA(Thr) + L-threonine + ATP = L-threonyl-tRNA(Thr) + AMP + diphosphate + H(+). Catalyzes the attachment of threonine to tRNA(Thr) in a two-step reaction: L-threonine is first activated by ATP to form Thr-AMP and then transferred to the acceptor end of tRNA(Thr). Also edits incorrectly charged L-seryl-tRNA(Thr). This Deinococcus geothermalis (strain DSM 11300 / CIP 105573 / AG-3a) protein is Threonine--tRNA ligase.